We begin with the raw amino-acid sequence, 147 residues long: D-aminoacyl-tRNA deacylase (147 aa).

Positions G137 to P138 match the Gly-cisPro motif, important for rejection of L-amino acids motif.

This sequence belongs to the DTD family. As to quaternary structure, homodimer.

The protein localises to the cytoplasm. The enzyme catalyses glycyl-tRNA(Ala) + H2O = tRNA(Ala) + glycine + H(+). The catalysed reaction is a D-aminoacyl-tRNA + H2O = a tRNA + a D-alpha-amino acid + H(+). Its function is as follows. An aminoacyl-tRNA editing enzyme that deacylates mischarged D-aminoacyl-tRNAs. Also deacylates mischarged glycyl-tRNA(Ala), protecting cells against glycine mischarging by AlaRS. Acts via tRNA-based rather than protein-based catalysis; rejects L-amino acids rather than detecting D-amino acids in the active site. By recycling D-aminoacyl-tRNA to D-amino acids and free tRNA molecules, this enzyme counteracts the toxicity associated with the formation of D-aminoacyl-tRNA entities in vivo and helps enforce protein L-homochirality. The protein is D-aminoacyl-tRNA deacylase of Jannaschia sp. (strain CCS1).